We begin with the raw amino-acid sequence, 132 residues long: MIVRTTTEITDTDRDITSEDGNWRSKRIVLGGDRVGFSFHETTIKAGSVNEFHYANHVEAVWLVEGTGKLIDLDNNKEYDLAPGSMYLLNGHERHRVEPDTQMRMLCVFNPPVTGREVHDENGVYPLVEVPA.

Belongs to the ectoine synthase family.

It carries out the reaction (2S)-4-acetamido-2-aminobutanoate = L-ectoine + H2O. It functions in the pathway amine and polyamine biosynthesis; ectoine biosynthesis; L-ectoine from L-aspartate 4-semialdehyde: step 3/3. Functionally, catalyzes the circularization of gamma-N-acetyl-alpha,gamma-diaminobutyric acid (ADABA) to ectoine (1,4,5,6-tetrahydro-2-methyl-4-pyrimidine carboxylic acid), which is an excellent osmoprotectant. This Rhodococcus erythropolis (strain PR4 / NBRC 100887) protein is L-ectoine synthase.